The primary structure comprises 438 residues: tRNA(Ile)-lysidine synthase (438 aa).

Residue serine 19 to serine 24 participates in ATP binding.

It belongs to the tRNA(Ile)-lysidine synthase family.

It is found in the cytoplasm. The enzyme catalyses cytidine(34) in tRNA(Ile2) + L-lysine + ATP = lysidine(34) in tRNA(Ile2) + AMP + diphosphate + H(+). Functionally, ligates lysine onto the cytidine present at position 34 of the AUA codon-specific tRNA(Ile) that contains the anticodon CAU, in an ATP-dependent manner. Cytidine is converted to lysidine, thus changing the amino acid specificity of the tRNA from methionine to isoleucine. This chain is tRNA(Ile)-lysidine synthase, found in Buchnera aphidicola subsp. Baizongia pistaciae (strain Bp).